The following is an 896-amino-acid chain: Zinc finger protein 574 (896 aa).

3 C2H2-type zinc fingers span residues 16–38, 76–98, and 126–148; these read YVCSECNQLYGSLEEVLMHQNSH, YQCLECGQLLMSPSQLLEHQELH, and YECVDCKALFASQELWLNHRQTH. A Phosphoserine modification is found at serine 164. Residues 214 to 236 form a C2H2-type 4 zinc finger; the sequence is YKCSECSQLFQLPADFLEHQATH. Residues 239–301 form a disordered region; that stretch reads APVPESQEPA…RARRNNSGEA (63 aa). Over residues 247–257 the composition is skewed to polar residues; that stretch reads PALQQEVQASS. A compositionally biased stretch (basic and acidic residues) spans 274 to 287; that stretch reads HSYELRNGEAIGRD. A Phosphoserine modification is found at serine 298. 4 consecutive C2H2-type zinc fingers follow at residues 309–331, 336–358, 364–386, and 392–413; these read LFCSACDQLFLSPHQLQQHLRSH, FKCPLCSRVFPSPSSLDQHLGDH, FLCVDCGLAFGTEALLLAHRRAH, and HSCPCGKTFVNLTKFLYHRRTH. Positions 434 to 460 are disordered; the sequence is FPEPAPAETGEPEAPEPPVSEETSAGP. 6 C2H2-type zinc fingers span residues 466 to 489, 495 to 517, 523 to 545, 551 to 573, 579 to 601, and 607 to 630; these read YRCLLCSREFGKALQLTRHQRFVH, HKCSICGKMFKKKSHVRNHLRTH, FPCPDCSKPFNSPANLARHRLTH, YRCGDCGKAFTQSSTLRQHRLVH, YRCQECGVRFHRPYRLLMHRYHH, and YKCRECPRSFLLRRLLEVHQLVVH. The C2H2-type 15; degenerate zinc finger occupies 636 to 659; it reads HRCPSCGAAFPSSLRLREHRCAAA. The C2H2-type 16 zinc-finger motif lies at 667–689; that stretch reads FECGTCGKKVGSAARLQAHEAAH. Residues 687-733 form a disordered region; sequence AAHAAAGPGEVLAKEPPAPRAPRATRAPVASPAGLGGTATASPAAPA. Positions 707-732 are enriched in low complexity; that stretch reads APRATRAPVASPAGLGGTATASPAAP. Phosphoserine is present on serine 717. Threonine 724 is modified (phosphothreonine). At serine 728 the chain carries Phosphoserine. 4 consecutive C2H2-type zinc fingers follow at residues 738–760, 766–788, 794–816, and 822–844; these read LECSECKKLFSTETSLQVHRRIH, YPCPDCGKAFRQSTHLKDHRRLH, FACEVCGKAFAISMRLAEHRRIH, and YSCPDCGKSYRSFSNLWKHRKTH. Arginine 832 is modified (asymmetric dimethylarginine).

Belongs to the krueppel C2H2-type zinc-finger protein family.

The protein localises to the nucleus. Its function is as follows. May be involved in transcriptional regulation. In Macaca fascicularis (Crab-eating macaque), this protein is Zinc finger protein 574 (ZNF574).